The sequence spans 336 residues: Putative ataxin-3 homolog (336 aa).

The region spanning 10–193 (GGLLYHEVQE…KECPMATEGS (184 aa)) is the Josephin domain. The active-site Nucleophile is Cys-23. His-132 functions as the Proton acceptor in the catalytic mechanism. Residue Asn-147 is part of the active site. Residues 244 to 263 (QEEADLNAAIAASLMDTGGP) enclose the UIM domain. Residues 281–336 (IESTSGEMSKDGNLEEQGANKSETSEPNSDNIESASGSNPKQNTTSLEGKESIKED) form a disordered region. The span at 299–327 (ANKSETSEPNSDNIESASGSNPKQNTTSL) shows a compositional bias: polar residues.

The protein localises to the nucleus. It carries out the reaction Thiol-dependent hydrolysis of ester, thioester, amide, peptide and isopeptide bonds formed by the C-terminal Gly of ubiquitin (a 76-residue protein attached to proteins as an intracellular targeting signal).. In terms of biological role, interacts with key regulators of transcription and represses transcription. Acts as a histone-binding protein that regulates transcription. Acts as a deubiquitinating enzyme. The protein is Putative ataxin-3 homolog of Oryza sativa subsp. japonica (Rice).